Here is a 196-residue protein sequence, read N- to C-terminus: Glycerol-3-phosphate acyltransferase (196 aa).

4 helical membrane passes run 4-24, 80-100, 114-134, and 155-175; these read LTLLMILSAYLLGSISSAVVI, PFFLGLIAVAACLGHIFPLYF, AMFPVAWEMALLLIATWLLVF, and AYWIKPQYTVPVIMISLLILW.

Belongs to the PlsY family. Probably interacts with PlsX.

The protein localises to the cell inner membrane. It catalyses the reaction an acyl phosphate + sn-glycerol 3-phosphate = a 1-acyl-sn-glycero-3-phosphate + phosphate. The protein operates within lipid metabolism; phospholipid metabolism. Catalyzes the transfer of an acyl group from acyl-phosphate (acyl-PO(4)) to glycerol-3-phosphate (G3P) to form lysophosphatidic acid (LPA). This enzyme utilizes acyl-phosphate as fatty acyl donor, but not acyl-CoA or acyl-ACP. This is Glycerol-3-phosphate acyltransferase from Idiomarina loihiensis (strain ATCC BAA-735 / DSM 15497 / L2-TR).